A 1187-amino-acid polypeptide reads, in one-letter code: Non-receptor tyrosine-protein kinase TYK2 (1187 aa).

Positions 26–431 (GGLKVLLHWA…GYFRLTADSS (406 aa)) constitute an FERM domain. At Tyr-292 the chain carries Phosphotyrosine. The disordered stretch occupies residues 335–366 (KEEGSSGSSGRNPQASLFGKKAKAHKAVGQPA). Over residues 339 to 349 (SSGSSGRNPQA) the composition is skewed to polar residues. One can recognise an SH2; atypical domain in the interval 450–529 (GIHGPLLEPF…GRSFPSVREL (80 aa)). Ser-499 and Ser-525 each carry phosphoserine. The 287-residue stretch at 589 to 875 (ITQLSHLGQG…LTRLQPHNLA (287 aa)) folds into the Protein kinase 1 domain. The residue at position 604 (Tyr-604) is a Phosphotyrosine. Positions 610-629 (VEGSGDPEEGKMDDEDPLVP) are disordered. Residues 614-626 (GDPEEGKMDDEDP) show a composition bias toward acidic residues. Phosphoserine is present on Ser-884. Positions 897–1176 (LKKIRDLGEG…PILKTVHEKY (280 aa)) constitute a Protein kinase 2 domain. ATP contacts are provided by residues 903-911 (LGEGHFGKV) and Lys-930. The Proton acceptor role is filled by Asp-1023. Tyr-1054 bears the Phosphotyrosine; by autocatalysis mark. Position 1055 is a phosphotyrosine (Tyr-1055).

This sequence belongs to the protein kinase superfamily. Tyr protein kinase family. JAK subfamily. Interacts (via FERM domain) with JAKMIP1. Interacts with PIK3R1; this interaction is important for cell migration. Interacts with MPL/TPOR. In terms of assembly, (Microbial infection) Interacts with Epstein-Barr virus protein LMP1; this interaction inhibits TYK2-mediated interferon signaling. As to quaternary structure, (Microbial infection) Interacts with papillomavirus-18 protein E6; this interaction impairs JAK-STAT activation by interferon-alpha. (Microbial infection) Interacts with Epstein-Barr virus (EBV) tegument protein BGLF2; this interaction participates in the inhibition of type I IFN signaling by the virus. Post-translationally, phosphorylated. Phosphorylation by JAK1 at Tyr-1054 and Tyr-1055 induces kinase activation. In terms of tissue distribution, observed in all cell lines analyzed. Expressed in a variety of lymphoid and non-lymphoid cell lines.

The catalysed reaction is L-tyrosyl-[protein] + ATP = O-phospho-L-tyrosyl-[protein] + ADP + H(+). With respect to regulation, the protein kinase 1 domain (also termed pseudokinase domain) mediates autoinhibition of the TYK2 kinase domain. Tyrosine kinase of the non-receptor type involved in numerous cytokines and interferons signaling, which regulates cell growth, development, cell migration, innate and adaptive immunity. Plays both structural and catalytic roles in numerous interleukins and interferons (IFN-alpha/beta) signaling. Associates with heterodimeric cytokine receptor complexes and activates STAT family members including STAT1, STAT3, STAT4 or STAT6. The heterodimeric cytokine receptor complexes are composed of (1) a TYK2-associated receptor chain (IFNAR1, IL12RB1, IL10RB or IL13RA1), and (2) a second receptor chain associated either with JAK1 or JAK2. In response to cytokine-binding to receptors, phosphorylates and activates receptors (IFNAR1, IL12RB1, IL10RB or IL13RA1), creating docking sites for STAT members. In turn, recruited STATs are phosphorylated by TYK2 (or JAK1/JAK2 on the second receptor chain), form homo- and heterodimers, translocate to the nucleus, and regulate cytokine/growth factor responsive genes. Negatively regulates STAT3 activity by promototing phosphorylation at a specific tyrosine that differs from the site used for signaling. The sequence is that of Non-receptor tyrosine-protein kinase TYK2 (TYK2) from Homo sapiens (Human).